A 414-amino-acid polypeptide reads, in one-letter code: Dimethylsulfoniopropionate lyase DddY (414 aa).

The first 18 residues, 1–18 (MKYMVLFSGLLFSNVLVA), serve as a signal peptide directing secretion.

Belongs to the DMSP lyase DddY family.

It localises to the periplasm. It carries out the reaction S,S-dimethyl-beta-propiothetin = acrylate + dimethyl sulfide + H(+). Its function is as follows. Catalyzes the cleavage of dimethylsulfoniopropionate (DMSP) into dimethyl sulfide (DMS) and acrylate. In Shewanella woodyi (strain ATCC 51908 / MS32), this protein is Dimethylsulfoniopropionate lyase DddY.